The following is a 446-amino-acid chain: Tubulin beta-1 chain (446 aa).

GTP contacts are provided by Gln11, Glu69, Ser138, Gly142, Thr143, Gly144, Asn204, and Asn226. Glu69 provides a ligand contact to Mg(2+). A disordered region spans residues 422–446 (YQQYQDATADEEGEYEDEEEGDLQD). Residues 429–446 (TADEEGEYEDEEEGDLQD) are compositionally biased toward acidic residues.

This sequence belongs to the tubulin family. Dimer of alpha and beta chains. A typical microtubule is a hollow water-filled tube with an outer diameter of 25 nm and an inner diameter of 15 nM. Alpha-beta heterodimers associate head-to-tail to form protofilaments running lengthwise along the microtubule wall with the beta-tubulin subunit facing the microtubule plus end conferring a structural polarity. Microtubules usually have 13 protofilaments but different protofilament numbers can be found in some organisms and specialized cells. Mg(2+) serves as cofactor. In terms of tissue distribution, found in areas of rapidly dividing tissues.

The protein localises to the cytoplasm. It is found in the cytoskeleton. Tubulin is the major constituent of microtubules, a cylinder consisting of laterally associated linear protofilaments composed of alpha- and beta-tubulin heterodimers. Microtubules grow by the addition of GTP-tubulin dimers to the microtubule end, where a stabilizing cap forms. Below the cap, tubulin dimers are in GDP-bound state, owing to GTPase activity of alpha-tubulin. The protein is Tubulin beta-1 chain (TUBB1) of Zea mays (Maize).